A 391-amino-acid polypeptide reads, in one-letter code: Ethanol acetyltransferase 1 (391 aa).

A mitochondrion-targeting transit peptide spans 1–24 (MFFTKVLNNQVANGLKQLPVHKRV). The 107-residue stretch at 48-154 (PIVFVHGIFG…DNSPIEQPHI (107 aa)) folds into the AB hydrolase-1 domain. Residues Ser-121, Asp-145, and His-295 each act as charge relay system in the active site.

The protein belongs to the AB hydrolase superfamily.

Its subcellular location is the mitochondrion. The catalysed reaction is ethanol + acetyl-CoA = ethyl acetate + CoA. It carries out the reaction acetyl-CoA + H2O = acetate + CoA + H(+). It catalyses the reaction ethyl acetate + H2O = ethanol + acetate + H(+). With respect to regulation, by ethanol. Thioesterase and esterase reactions are highly repressed in the presence of high ethanol concentrations. In terms of biological role, alcohol acetyltransferase that catalyzes the synthesis of ethyl acetate from ethanol and acetyl-CoA. Can also function as a thioesterase by hydrolyzing acetyl-CoA in the absence of ethanol, as well as esterase hydrolyzing ethyl acetate. The sequence is that of Ethanol acetyltransferase 1 (EAT1) from Wickerhamomyces anomalus (strain ATCC 58044 / CBS 1984 / NCYC 433 / NRRL Y-366-8) (Yeast).